Reading from the N-terminus, the 375-residue chain is Nucleolysin TIAR (375 aa).

RRM domains are found at residues 9-85 (RTLY…WATT) and 97-175 (FHVF…WATR). Lys-122 bears the N6-acetyllysine mark. The residue at position 201 (Ser-201) is a Phosphoserine. The region spanning 205–277 (CTVYCGGIAS…HVVKCYWGKE (73 aa)) is the RRM 3 domain. The segment at 345–375 (FGAQPPQGQAPPPVIPPPNQAGYGMASYQTQ) is disordered. The span at 352 to 363 (GQAPPPVIPPPN) shows a compositional bias: pro residues.

As to quaternary structure, interacts with FASTK. Post-translationally, phosphorylated by MAPK14 following DNA damage, releasing TIAR from GADD45A mRNA. As to expression, expressed in brain, heart, kidney, lung and skeletal muscle.

It localises to the nucleus. It is found in the cytoplasm. The protein resides in the cytolytic granule. Its subcellular location is the stress granule. In terms of biological role, RNA-binding protein involved in alternative pre-RNA splicing and in cytoplasmic stress granules formation. Shows a preference for uridine-rich RNAs. Activates splicing of alternative exons with weak 5' splice sites followed by a U-rich stretch on its own pre-mRNA and on TIA1 mRNA. Promotes the inclusion of TIA1 exon 5 to give rise to the long isoform (isoform a) of TIA1. Acts downstream of the stress-induced phosphorylation of EIF2S1/EIF2A to promote the recruitment of untranslated mRNAs to cytoplasmic stress granules (SG). Possesses nucleolytic activity against cytotoxic lymphocyte target cells. May be involved in apoptosis. This chain is Nucleolysin TIAR (TIAL1), found in Homo sapiens (Human).